A 331-amino-acid polypeptide reads, in one-letter code: Phosphatidylinositol transfer protein 4 (331 aa).

It belongs to the PtdIns transfer protein family. PI transfer class IIA subfamily.

Its function is as follows. Catalyzes the transfer of PtdIns and phosphatidylcholine between membranes. This chain is Phosphatidylinositol transfer protein 4 (pitD), found in Dictyostelium discoideum (Social amoeba).